The primary structure comprises 600 residues: Zinc metalloproteinase-disintegrin-like cobrin (600 aa).

Residues 1 to 8 form the signal peptide; it reads MIQLSWSS. Residues 9 to 179 constitute a propeptide that is removed on maturation; the sequence is IILESGNVND…DEPIKKTSLL (171 aa). The region spanning 193–388 is the Peptidase M12B domain; the sequence is KYIEFYMVVD…DRPQCILNKP (196 aa). The Ca(2+) site is built by Glu196 and Asp280. Intrachain disulfides connect Cys304/Cys383, Cys344/Cys367, and Cys346/Cys351. His329, His333, and His339 together coordinate Zn(2+). The Ca(2+) site is built by Cys383, Asn386, Ile398, Asn401, Phe403, Glu405, Glu408, and Asp411. One can recognise a Disintegrin domain in the interval 396-482; it reads PPICGNYFVE…ECPTDVFQRN (87 aa). 14 cysteine pairs are disulfide-bonded: Cys399-Cys428, Cys410-Cys423, Cys412-Cys418, Cys422-Cys445, Cys436-Cys442, Cys441-Cys467, Cys454-Cys474, Cys461-Cys492, Cys486-Cys497, Cys504-Cys554, Cys519-Cys562, Cys532-Cys542, Cys549-Cys588, and Cys582-Cys593. An N-linked (GlcNAc...) asparagine glycan is attached at Asn424. The D/ECD-tripeptide signature appears at 460–462; sequence DCD. Positions 462, 463, 465, 477, and 478 each coordinate Ca(2+).

Belongs to the venom metalloproteinase (M12B) family. P-III subfamily. P-IIIa sub-subfamily. Monomer. The cofactor is Zn(2+). Expressed by the venom gland.

It localises to the secreted. Functionally, snake venom zinc metalloproteinase that may cleave complement protein C3 into C3c-like (C3o). The sequence is that of Zinc metalloproteinase-disintegrin-like cobrin from Naja kaouthia (Monocled cobra).